We begin with the raw amino-acid sequence, 321 residues long: MDQAEYFHSWCRQDEMMLNLLEKCPTQQIQRLPLPIRRLEKKQEIQKMLEARREDYHKAMEGVAREWEKLQEKEAEIRVGLEKYKKSIVKNDKKQERAFRDAAKARSMCIQYDLQLKALQEQCEELDKKRAKTKAQVQKYEKCHRYLEKVVKASEKFQSIPELMSQFHALVSYLPQEEQEEQKSQESRSQRIHCMEEKSDSIVQFSNEIHRLYIRLEKAKKKRREWELRWNQMLKTATRKNLLLGTIKAAVRDIFQTVISQGLGSNSVGEDDIVEQLEIIRKDIEDLTDIWEKLSLNEELMEPIRAPLLPTDKTLGHPPSQ.

Coiled-coil stretches lie at residues 36–144 and 202–229; these read IRRL…EKCH and IVQFSNEIHRLYIRLEKAKKKRREWELR.

It belongs to the CFAP73 family.

The sequence is that of Coiled-coil domain-containing protein 42-like 1 from Xenopus laevis (African clawed frog).